Consider the following 392-residue polypeptide: Odorant receptor 85f (392 aa).

At 1-36 (MEPVQYSYEDFARLPTTVFWIMGYDMLGVPKTRSRR) the chain is on the cytoplasmic side. The chain crosses the membrane as a helical span at residues 37-57 (ILYWIYRFLCLASHGVCVGVM). Topologically, residues 58-69 (VFRMVEAKTIDN) are extracellular. N-linked (GlcNAc...) asparagine glycosylation is present at Asn69. A helical transmembrane segment spans residues 70–90 (VSLIMRYATLVTYIINSDTKF). Topologically, residues 91–130 (ATVLQRSAIQSLNSKLAELYPKTTLDRIYHRVNDHYWTKS) are cytoplasmic. Residues 131 to 151 (FVYLVIIYIGSSIMVVIGPII) traverse the membrane as a helical segment. Residues 152 to 179 (TSIIAYFTHNVFTYMHCYPYFLYDPEKD) are Extracellular-facing. The chain crosses the membrane as a helical span at residues 180 to 200 (PVWIYISIYALEWLHSTQMVI). The Cytoplasmic portion of the chain corresponds to 201 to 268 (SNIGADIWLL…NDLNGIFGKS (68 aa)). The helical transmembrane segment at 269–289 (LLLSLLTTAAVICTVAVYTLI) threads the bilayer. Topologically, residues 290–295 (QGPTLE) are extracellular. The helical transmembrane segment at 296 to 316 (GFTYVIFIGTSVMQVYLVCYY) threads the bilayer. Over 317–363 (GQQVLDLSGEVAHAVYNHDFHDASIAYKRYLLIIIIRAQQPVELNAM) the chain is Cytoplasmic. A helical transmembrane segment spans residues 364–384 (GYLSISLDTFKQLMSVSYRVI). The Extracellular segment spans residues 385–392 (TMLMQMIQ).

The protein belongs to the insect chemoreceptor superfamily. Heteromeric odorant receptor channel (TC 1.A.69) family. Or49a subfamily. As to quaternary structure, interacts with Orco. Complexes exist early in the endomembrane system in olfactory sensory neurons (OSNs), coupling these complexes to the conserved ciliary trafficking pathway. Expressed in olfactory sensory neurons in the antenna.

Its subcellular location is the cell membrane. Its function is as follows. Odorant receptor which mediates acceptance or avoidance behavior, depending on its substrates. The odorant receptor repertoire encodes a large collection of odor stimuli that vary widely in identity, intensity, and duration. May form a complex with Orco to form odorant-sensing units, providing sensitive and prolonged odorant signaling and calcium permeability. The chain is Odorant receptor 85f (Or85f) from Drosophila melanogaster (Fruit fly).